Here is a 414-residue protein sequence, read N- to C-terminus: uncharacterized protein (414 aa).

The tract at residues 87–117 is disordered; the sequence is KTNDDNKTNGRETHLRPSPSKPEYTGRPTQN. The segment covering 88-101 has biased composition (basic and acidic residues); that stretch reads TNDDNKTNGRETHL. The stretch at 243–405 forms a coiled coil; sequence SMLQSSIDKL…RNKLEMEVER (163 aa).

This is an uncharacterized protein from Encephalitozoon cuniculi (strain GB-M1) (Microsporidian parasite).